The chain runs to 128 residues: uncharacterized protein (128 aa).

Residues 6 to 74 form the S1 motif domain; sequence GSKLQGKITG…KDGKIGLSIK (69 aa). The segment at 72 to 128 is disordered; it reads SIKKAKDRPQARPRNDFRPKESFEQKMNKFLKDSEDRLSSLKRNTESKRGGRGARRG. Residues 78–120 are compositionally biased toward basic and acidic residues; it reads DRPQARPRNDFRPKESFEQKMNKFLKDSEDRLSSLKRNTESKR.

It belongs to the peptidase U57 family.

This is an uncharacterized protein from Bacillus subtilis (strain 168).